The chain runs to 65 residues: Disintegrin CC8B (65 aa).

Residues 1-65 (NSAHPCCDPV…DCPRNPWHKS (65 aa)) form the Disintegrin domain. Cystine bridges form between C6–C29, C20–C26, C25–C50, and C38–C57. The Cell attachment site; atypical (WGD) signature appears at 42–44 (WGD).

This sequence belongs to the disintegrin family. Dimeric disintegrin subfamily. Heterodimer with CC8A; disulfide-linked. As to expression, expressed by the venom gland.

It is found in the secreted. Inhibits integrins alpha-IIb/beta-3 (ITGA2B/ITGB3), alpha-V/beta-3 (ITGAV/ITGB3), and alpha-5/beta-1 (ITGA5/ITGB1). This chain is Disintegrin CC8B, found in Cerastes cerastes (Horned desert viper).